Reading from the N-terminus, the 638-residue chain is Cell division control protein 45 homolog (638 aa).

The disordered stretch occupies residues 151 to 204 (ELSDEENSDSSNEREEEVEDDNRSVESYSSSDYQARSRRRFSEETTQRRAEIKE). Acidic residues predominate over residues 153 to 170 (SDEENSDSSNEREEEVED). Positions 190–204 (RFSEETTQRRAEIKE) are enriched in basic and acidic residues.

The protein belongs to the CDC45 family. Interacts with sld3.

It is found in the nucleus. Required for initiation of chromosomal DNA replication. May have a role in regulating the MCM proteins nda1 and nda4. This chain is Cell division control protein 45 homolog (sna41), found in Schizosaccharomyces pombe (strain 972 / ATCC 24843) (Fission yeast).